A 153-amino-acid chain; its full sequence is Interleukin-4 (153 aa).

An N-terminal signal peptide occupies residues 1–24 (MGLTSQLLPPLFFLLACAGNFAHG). 3 disulfides stabilise this stretch: Cys27–Cys151, Cys48–Cys89, and Cys70–Cys123. A glycan (N-linked (GlcNAc...) asparagine) is linked at Asn62.

The protein belongs to the IL-4/IL-13 family.

The protein resides in the secreted. Participates in at least several B-cell activation processes as well as of other cell types. It is a costimulator of DNA-synthesis. It induces the expression of class II MHC molecules on resting B-cells. It enhances both secretion and cell surface expression of IgE and IgG1. It also regulates the expression of the low affinity Fc receptor for IgE (CD23) on both lymphocytes and monocytes. Positively regulates IL31RA expression in macrophages. Stimulates autophagy in dendritic cells by interfering with mTORC1 signaling and through the induction of RUFY4. The polypeptide is Interleukin-4 (IL4) (Papio anubis (Olive baboon)).